The chain runs to 420 residues: MGFITKAIPLALAAASVINGAEIMETRAGVQTLADKYIVVMNDGMTDKDFDSHRSWVNRTHRRRLIRRGAKAMGGMKHTYRFPTGLKGYSGHFDEQMINEISKRADVKYIERDARVQINAIEQQDNVPSWGLARVGSKEPGGTTYYYDGTAGEGSTAYVIDTGTDIQHEEFEGRATWGANFVDDMDMDCNGHGTHVSGTIGGKTFGVAKKSNVVAVKVLDCNGSGSNSGVIMGMEWATKDAQQKGADKAVANMSLGGAFSQASNDAAAAIAKGGVFLAVAAGNDNVDAADSSPASEPSICTVAASTEQDSKADFSNFGQVVDVYAPGDSITSAKPGGGSQVLSGTSMATPHVAGLGAYLIGLGKGGGPGLCDTIKQTAIDVIQNPGASTTSKLINNGSGIGFLSFPLNIYEEQWSKLFDL.

The first 20 residues, 1-20 (MGFITKAIPLALAAASVING), serve as a signal peptide directing secretion. The propeptide occupies 21 to 119 (AEIMETRAGV…IERDARVQIN (99 aa)). The 83-residue stretch at 36 to 118 (KYIVVMNDGM…YIERDARVQI (83 aa)) folds into the Inhibitor I9 domain. The 285-residue stretch at 129–413 (SWGLARVGSK…SFPLNIYEEQ (285 aa)) folds into the Peptidase S8 domain. Residues D161 and H192 each act as charge relay system in the active site. 2 N-linked (GlcNAc...) asparagine glycosylation sites follow: N222 and N252. Residue S346 is the Charge relay system of the active site. N-linked (GlcNAc...) asparagine glycosylation occurs at N396.

The protein belongs to the peptidase S8 family.

Its subcellular location is the secreted. Its function is as follows. Secreted subtilisin-like serine protease with keratinolytic activity that contributes to pathogenicity. This Arthroderma benhamiae (strain ATCC MYA-4681 / CBS 112371) (Trichophyton mentagrophytes) protein is Subtilisin-like protease 7 (SUB7).